Here is a 473-residue protein sequence, read N- to C-terminus: Photosystem II CP43 reaction center protein (473 aa).

Positions 1–14 are excised as a propeptide; the sequence is MKNLYSLRRFYHVE. Thr15 bears the N-acetylthreonine mark. The residue at position 15 (Thr15) is a Phosphothreonine. 5 helical membrane-spanning segments follow: residues 69–93, 134–155, 178–200, 255–275, and 291–312; these read LFEV…PHLA, LIGP…KDKN, KARY…RVIT, KPFG…LSYS, and WFNN…ASQA. Glu367 is a [CaMn4O5] cluster binding site. A helical membrane pass occupies residues 447-471; the sequence is RARAAAAGFEKGIDRDTEPTLFMRP.

This sequence belongs to the PsbB/PsbC family. PsbC subfamily. In terms of assembly, PSII is composed of 1 copy each of membrane proteins PsbA, PsbB, PsbC, PsbD, PsbE, PsbF, PsbH, PsbI, PsbJ, PsbK, PsbL, PsbM, PsbT, PsbX, PsbY, PsbZ, Psb30/Ycf12, at least 3 peripheral proteins of the oxygen-evolving complex and a large number of cofactors. It forms dimeric complexes. The cofactor is Binds multiple chlorophylls and provides some of the ligands for the Ca-4Mn-5O cluster of the oxygen-evolving complex. It may also provide a ligand for a Cl- that is required for oxygen evolution. PSII binds additional chlorophylls, carotenoids and specific lipids..

The protein resides in the plastid. It localises to the chloroplast thylakoid membrane. In terms of biological role, one of the components of the core complex of photosystem II (PSII). It binds chlorophyll and helps catalyze the primary light-induced photochemical processes of PSII. PSII is a light-driven water:plastoquinone oxidoreductase, using light energy to abstract electrons from H(2)O, generating O(2) and a proton gradient subsequently used for ATP formation. The polypeptide is Photosystem II CP43 reaction center protein (Nephroselmis olivacea (Green alga)).